The sequence spans 342 residues: S-adenosylmethionine:tRNA ribosyltransferase-isomerase (342 aa).

It belongs to the QueA family. Monomer.

It localises to the cytoplasm. It catalyses the reaction 7-aminomethyl-7-carbaguanosine(34) in tRNA + S-adenosyl-L-methionine = epoxyqueuosine(34) in tRNA + adenine + L-methionine + 2 H(+). It participates in tRNA modification; tRNA-queuosine biosynthesis. Functionally, transfers and isomerizes the ribose moiety from AdoMet to the 7-aminomethyl group of 7-deazaguanine (preQ1-tRNA) to give epoxyqueuosine (oQ-tRNA). This is S-adenosylmethionine:tRNA ribosyltransferase-isomerase from Streptococcus pyogenes serotype M1.